Here is a 292-residue protein sequence, read N- to C-terminus: NAD kinase (292 aa).

D73 (proton acceptor) is an active-site residue. NAD(+) contacts are provided by residues 73 to 74 (DG), 147 to 148 (NE), H158, R175, D177, 188 to 193 (TAYSLS), and Q247.

This sequence belongs to the NAD kinase family. Requires a divalent metal cation as cofactor.

The protein resides in the cytoplasm. It carries out the reaction NAD(+) + ATP = ADP + NADP(+) + H(+). Involved in the regulation of the intracellular balance of NAD and NADP, and is a key enzyme in the biosynthesis of NADP. Catalyzes specifically the phosphorylation on 2'-hydroxyl of the adenosine moiety of NAD to yield NADP. This chain is NAD kinase, found in Enterobacter sp. (strain 638).